The primary structure comprises 514 residues: Probable outer membrane protein pmp12 (514 aa).

Residues 1–21 (MTILRNFLTCSALFLALPAAA) form the signal peptide.

This sequence belongs to the PMP outer membrane protein family.

The protein localises to the secreted. Its subcellular location is the cell wall. The protein resides in the cell outer membrane. The sequence is that of Probable outer membrane protein pmp12 (pmp12) from Chlamydia pneumoniae (Chlamydophila pneumoniae).